Here is a 154-residue protein sequence, read N- to C-terminus: Protein X (154 aa).

The interval 68 to 117 is mitochondrial targeting sequence; the sequence is PCALRFTSARRMETTVNAHQILPKVLHKRTLGLSAMSTTDLEAYFKDCLF.

This sequence belongs to the orthohepadnavirus protein X family. May form homodimer. May interact with host CEBPA, CFLAR, CREB1, DDB1, E4F1, HBXIP, HSPD1/HSP60, NFKBIA, POLR2E and SMAD4. Interacts with host SMC5-SMC6 complex and induces its degradation. Interacts with host TRPC4AP; leading to prevent ubiquitination of TRPC4AP. Interacts with host PLSCR1; this interaction promotes ubiquitination and degradation of HBx and impairs HBx-mediated cell proliferation. A fraction may be phosphorylated in insect cells and HepG2 cells, a human hepatoblastoma cell line. Phosphorylated in vitro by host protein kinase C or mitogen-activated protein kinase. N-acetylated in insect cells.

The protein resides in the host cytoplasm. It localises to the host nucleus. It is found in the host mitochondrion. In terms of biological role, multifunctional protein that plays a role in silencing host antiviral defenses and promoting viral transcription. Does not seem to be essential for HBV infection. May be directly involved in development of cirrhosis and liver cancer (hepatocellular carcinoma). Most of cytosolic activities involve modulation of cytosolic calcium. The effect on apoptosis is controversial depending on the cell types in which the studies have been conducted. May induce apoptosis by localizing in mitochondria and causing loss of mitochondrial membrane potential. May also modulate apoptosis by binding host CFLAR, a key regulator of the death-inducing signaling complex (DISC). Promotes viral transcription by using the host E3 ubiquitin ligase DDB1 to target the SMC5-SMC6 complex to proteasomal degradation. This host complex would otherwise bind to viral episomal DNA, and prevents its transcription. Moderately stimulates transcription of many different viral and cellular transcription elements. Promoters and enhancers stimulated by HBx contain DNA binding sites for NF-kappa-B, AP-1, AP-2, c-EBP, ATF/CREB, or the calcium-activated factor NF-AT. The polypeptide is Protein X (Hepatitis B virus genotype E (isolate Cote d'Ivoire/ABI-212/2003) (HBV-E)).